Here is a 386-residue protein sequence, read N- to C-terminus: Glucose-1-phosphate adenylyltransferase (386 aa).

Residues Y100, G165, E180–K181, and S191 contribute to the alpha-D-glucose 1-phosphate site.

This sequence belongs to the bacterial/plant glucose-1-phosphate adenylyltransferase family. Homotetramer.

The enzyme catalyses alpha-D-glucose 1-phosphate + ATP + H(+) = ADP-alpha-D-glucose + diphosphate. The protein operates within glycan biosynthesis; glycogen biosynthesis. Its function is as follows. Involved in the biosynthesis of ADP-glucose, a building block required for the elongation reactions to produce glycogen. Catalyzes the reaction between ATP and alpha-D-glucose 1-phosphate (G1P) to produce pyrophosphate and ADP-Glc. This is Glucose-1-phosphate adenylyltransferase from Clostridium botulinum (strain Alaska E43 / Type E3).